The following is an 81-amino-acid chain: Acyl carrier protein (81 aa).

Residues 5–80 (EEIFSKVKSI…DIVSYIEKKL (76 aa)) enclose the Carrier domain. Residue Ser-40 is modified to O-(pantetheine 4'-phosphoryl)serine.

This sequence belongs to the acyl carrier protein (ACP) family. Post-translationally, 4'-phosphopantetheine is transferred from CoA to a specific serine of apo-ACP by AcpS. This modification is essential for activity because fatty acids are bound in thioester linkage to the sulfhydryl of the prosthetic group.

The protein resides in the cytoplasm. Its pathway is lipid metabolism; fatty acid biosynthesis. Carrier of the growing fatty acid chain in fatty acid biosynthesis. This chain is Acyl carrier protein, found in Thermotoga maritima (strain ATCC 43589 / DSM 3109 / JCM 10099 / NBRC 100826 / MSB8).